The chain runs to 113 residues: UPF0342 protein spyM18_0873 (113 aa).

This sequence belongs to the UPF0342 family.

The sequence is that of UPF0342 protein spyM18_0873 from Streptococcus pyogenes serotype M18 (strain MGAS8232).